The chain runs to 317 residues: MTQTLPVGLSATSVVAASSANLGPGFDSLGIALSLYDEIVVETVESGLTVHVEGEGAGQVPLDQTHLVVRAINKGLQAAGFSAPGLVVRCRNDIPHSRGLGSSAAAVVGGLAAVNGLVTQAGSEPMDDARLIQLSSEFEGHPDNAAAAVLGGAVVSWTEQAGAFGGEPRYSAVPVRLHPDIRLFPAVPQQRSSTAETRVLLPEQVSHVDARFNLSRAALLVVALSERPDLLMAATEDVLHQPQRAAAMPASAEYLAILRRCGIAAVLSGAGPSVLGLSAQSGLPAEALEYGTAHGFTVTEMSVGAGVRWTAGAVVRN.

Pro-95–Ala-105 is a binding site for ATP.

The protein belongs to the GHMP kinase family. Homoserine kinase subfamily.

The protein resides in the cytoplasm. It catalyses the reaction L-homoserine + ATP = O-phospho-L-homoserine + ADP + H(+). It participates in amino-acid biosynthesis; L-threonine biosynthesis; L-threonine from L-aspartate: step 4/5. In terms of biological role, catalyzes the ATP-dependent phosphorylation of L-homoserine to L-homoserine phosphate. In Mycolicibacterium smegmatis (strain ATCC 700084 / mc(2)155) (Mycobacterium smegmatis), this protein is Homoserine kinase.